We begin with the raw amino-acid sequence, 452 residues long: Probable 1,4-beta-D-glucan cellobiohydrolase A (452 aa).

Residues Met1 to Ala17 form the signal peptide. Asn81 carries an N-linked (GlcNAc...) asparagine glycan. The active-site Nucleophile is the Glu226. Residue Glu231 is the Proton donor of the active site. Asn284 carries N-linked (GlcNAc...) asparagine glycosylation. The disordered stretch occupies residues Ala405 to His431.

Belongs to the glycosyl hydrolase 7 (cellulase C) family.

The protein resides in the secreted. It catalyses the reaction Hydrolysis of (1-&gt;4)-beta-D-glucosidic linkages in cellulose and cellotetraose, releasing cellobiose from the non-reducing ends of the chains.. Functionally, the biological conversion of cellulose to glucose generally requires three types of hydrolytic enzymes: (1) Endoglucanases which cut internal beta-1,4-glucosidic bonds; (2) Exocellobiohydrolases that cut the disaccharide cellobiose from the non-reducing end of the cellulose polymer chain; (3) Beta-1,4-glucosidases which hydrolyze the cellobiose and other short cello-oligosaccharides to glucose. The sequence is that of Probable 1,4-beta-D-glucan cellobiohydrolase A (cbhA) from Aspergillus fumigatus (strain CBS 144.89 / FGSC A1163 / CEA10) (Neosartorya fumigata).